The chain runs to 707 residues: MAP kinase-interacting serine/threonine-protein kinase mnk-1 (707 aa).

A compositionally biased stretch (polar residues) spans 1–24; that stretch reads MFFLDNTDSMTSSSRGITMPNTIS. 2 disordered regions span residues 1–29 and 101–131; these read MFFL…HEDV and RQRE…YVGR. Positions 203 to 493 constitute a Protein kinase domain; the sequence is KLTDEHLGSG…ADQILSHRWL (291 aa). ATP-binding positions include 209-217 and Lys232; that span reads LGSGAYGSV. Asp325 functions as the Proton acceptor in the catalytic mechanism. 2 disordered regions span residues 589–628 and 688–707; these read RSGE…SADD and FEDE…QVNV.

This sequence belongs to the protein kinase superfamily. CAMK Ser/Thr protein kinase family. The cofactor is Mg(2+). In terms of tissue distribution, expressed in pharynx, intestine, vulva and body wall muscles.

It is found in the nucleus. The protein resides in the cytoplasm. It carries out the reaction L-seryl-[protein] + ATP = O-phospho-L-seryl-[protein] + ADP + H(+). It catalyses the reaction L-threonyl-[protein] + ATP = O-phospho-L-threonyl-[protein] + ADP + H(+). Its function is as follows. Serine/threonine-protein kinase which is required in the germline to positively regulate lifespan. May play a role in body wall muscle contraction. May be involved in embryonic cytokinesis. The protein is MAP kinase-interacting serine/threonine-protein kinase mnk-1 of Caenorhabditis elegans.